Here is an 85-residue protein sequence, read N- to C-terminus: Large ribosomal subunit protein eL34 (85 aa).

This sequence belongs to the eukaryotic ribosomal protein eL34 family.

In Saccharolobus islandicus (strain Y.N.15.51 / Yellowstone #2) (Sulfolobus islandicus), this protein is Large ribosomal subunit protein eL34.